Here is a 232-residue protein sequence, read N- to C-terminus: Small ribosomal subunit protein uS2 (232 aa).

The protein belongs to the universal ribosomal protein uS2 family.

This is Small ribosomal subunit protein uS2 from Baumannia cicadellinicola subsp. Homalodisca coagulata.